The chain runs to 50 residues: Putative protein HokF (50 aa).

The helical transmembrane segment at 5 to 25 (YALVAVIVLCLTVPGFTLLVG) threads the bilayer.

Belongs to the Hok/Gef family.

The protein resides in the cell inner membrane. Toxic component of a type I toxin-antitoxin (TA) system. When overexpressed kills cells within minutes; causes collapse of the transmembrane potential and arrest of respiration. Its toxic effect is probably neutralized by an antisense antitoxin Sok RNA. The protein is Putative protein HokF (hokF) of Escherichia coli O157:H7.